A 249-amino-acid chain; its full sequence is Probable transcriptional regulator ycf27 (249 aa).

In terms of domain architecture, Response regulatory spans 13–126 (HLLIVDDENN…ELEARIQSIL (114 aa)). 4-aspartylphosphate is present on D62. A DNA-binding region (H-T-H motif) is located at residues 82 to 100 (DIPIIMLTALEDVLDKVTG). The ompR/PhoB-type DNA-binding region spans 142–246 (INLFKTGSLN…ARGTGYLCRK (105 aa)).

The protein resides in the plastid. It is found in the chloroplast. Its function is as follows. Probable promoter-specific protein mediating the interaction between DNA and RNA polymerase. This is Probable transcriptional regulator ycf27 (ycf27) from Cyanidium caldarium (Red alga).